The primary structure comprises 361 residues: Probable pectinesterase 49 (361 aa).

The signal sequence occupies residues 1–22 (MGYISLALVALLVFFASPVVLA). N128 carries N-linked (GlcNAc...) asparagine glycosylation. Q174 provides a ligand contact to substrate. The active-site Proton donor is the D197. The active-site Nucleophile is the D218. Substrate is bound by residues R275 and W277.

Belongs to the pectinesterase family. Expressed in flower buds.

The protein resides in the secreted. It localises to the cell wall. The catalysed reaction is [(1-&gt;4)-alpha-D-galacturonosyl methyl ester](n) + n H2O = [(1-&gt;4)-alpha-D-galacturonosyl](n) + n methanol + n H(+). The protein operates within glycan metabolism; pectin degradation; 2-dehydro-3-deoxy-D-gluconate from pectin: step 1/5. In terms of biological role, acts in the modification of cell walls via demethylesterification of cell wall pectin. The polypeptide is Probable pectinesterase 49 (PME49) (Arabidopsis thaliana (Mouse-ear cress)).